Reading from the N-terminus, the 649-residue chain is Acetyl-coenzyme A synthetase (649 aa).

CoA is bound by residues 191-194 (RGGR), T309, and N333. ATP contacts are provided by residues 385–387 (GEP), 409–414 (DTWWQT), D498, and R513. S521 provides a ligand contact to CoA. R524 provides a ligand contact to ATP. Residues V535, H537, and V540 each contribute to the Mg(2+) site. R582 is a binding site for CoA. K607 is subject to N6-acetyllysine.

The protein belongs to the ATP-dependent AMP-binding enzyme family. Mg(2+) serves as cofactor. Post-translationally, acetylated. Deacetylation by the SIR2-homolog deacetylase activates the enzyme.

The catalysed reaction is acetate + ATP + CoA = acetyl-CoA + AMP + diphosphate. Functionally, catalyzes the conversion of acetate into acetyl-CoA (AcCoA), an essential intermediate at the junction of anabolic and catabolic pathways. AcsA undergoes a two-step reaction. In the first half reaction, AcsA combines acetate with ATP to form acetyl-adenylate (AcAMP) intermediate. In the second half reaction, it can then transfer the acetyl group from AcAMP to the sulfhydryl group of CoA, forming the product AcCoA. The sequence is that of Acetyl-coenzyme A synthetase from Novosphingobium aromaticivorans (strain ATCC 700278 / DSM 12444 / CCUG 56034 / CIP 105152 / NBRC 16084 / F199).